A 281-amino-acid polypeptide reads, in one-letter code: MAQKIIRVGDIEIANDKPMVLFGGMNVLESRDMAMQVCEEYVKVTEKLGIPYVFKASFDKANRSSVTSYRGPGLEEGMRIFQDIKQAFGVPIITDVHEPDQAAVVAEVCDIIQLPAFLSRQTDLVVAMAKTNAVINIKKAQFLAPQEMKHILNKCVEAGNDQLILCERGSSFGYNNLVVDMLGFGIMKQFEYPVFFDVTHSLQMPGGRSDSAGGRRAQVTDLAKAGMSQSLAGLFLEAHPDPDNAKCDGPCALRLDKLEPFLAQLKALDELVKSFPTVETA.

It belongs to the KdsA family.

It is found in the cytoplasm. It catalyses the reaction D-arabinose 5-phosphate + phosphoenolpyruvate + H2O = 3-deoxy-alpha-D-manno-2-octulosonate-8-phosphate + phosphate. It participates in carbohydrate biosynthesis; 3-deoxy-D-manno-octulosonate biosynthesis; 3-deoxy-D-manno-octulosonate from D-ribulose 5-phosphate: step 2/3. It functions in the pathway bacterial outer membrane biogenesis; lipopolysaccharide biosynthesis. The chain is 2-dehydro-3-deoxyphosphooctonate aldolase from Pseudomonas fluorescens (strain Pf0-1).